A 180-amino-acid chain; its full sequence is Large ribosomal subunit protein uL6 (180 aa).

The protein belongs to the universal ribosomal protein uL6 family. As to quaternary structure, part of the 50S ribosomal subunit.

Functionally, this protein binds to the 23S rRNA, and is important in its secondary structure. It is located near the subunit interface in the base of the L7/L12 stalk, and near the tRNA binding site of the peptidyltransferase center. This Anaeromyxobacter dehalogenans (strain 2CP-C) protein is Large ribosomal subunit protein uL6.